A 113-amino-acid polypeptide reads, in one-letter code: Protein MGF 110-2L (113 aa).

The first 31 residues, 1 to 31 (MGFFSYLGLVLVGLASLTSLASLANLQDFST), serve as a signal peptide directing secretion.

It belongs to the asfivirus MGF 110 family.

In terms of biological role, plays a role in virus cell tropism, and may be required for efficient virus replication in macrophages. In African swine fever virus (isolate Pig/Kenya/KEN-50/1950) (ASFV), this protein is Protein MGF 110-2L.